The following is a 1620-amino-acid chain: MLFKNEDSGNGVYCFTYNNFSDVTISDILNIRNDNKNNDNEDNKQDDEEKNDEDDNKSNLLLEENEENKRQGDKPFEDLSLFSFKNNEQCYDNIKMQQAILNSSYEKNVKNIVKIVYHEDCKLLYENTDIHVELPSIVYGRNRNKNNDVVNKCNQYNDDDYTNKCNQYNDDDYTNKCNQYNDDDYTNKCNQYNDNDYTNKCNQYNDNDYTNKCNQYNDVRKITNLKYFINHNWKNINLINEKLFLKNLKELEEILNYNFLHICKNKCKQYNKKRKNERHFSYHDNFLSHYIIYKKNKFIKHNKNEHINGNHYDAHESTNTYDEEKTREKHNNKNNNMKYCLNKYPYDNVNAPLNLSCPWYEKKIENIYCLNIPGYKYKYKYICPSMSKMNDEKIKELYIPKGHILFNSKFESGNLKYVIKEENDKEVYSLFLNPDIRMNEKKNQWFYFSASYVPNEYYTNELYKMKMCNKDINHIGDNMNVVYNYMNGTGNNINNIVNNLDSTVNYMNSTGNNINNIVNNLDSTVNYMNSTGNNINNIVNNLDSTVNYMNSTGNNINNIVNNLDSTVNYMNSTGNYLNRKNNNHLSYTNWSGQRCMNQYLNDINNDEIDTNLDGNRKYSLDACDKFTVRNVRKLEKPFTVRFKIENMAKPFFLYKYGHSPLSFSECKYKIENIQWERNSYDIKYIKNSSCKHYNIKKNSMEYYNYNTYTLEFSYDFTYAYDTVYFASSYPYTYSYLSEYLCLIRNLLKDHPTINYIEERLCKTSCGFDCPVLCITNYDRMEEYNKEELKESVEKKQNIVEANNTCDEKLVDGMDISSNAIRKEIKKKGYILTSKKLDKNRVVNNLFVDMKNGCTRGCASGCTNGCANGYTNGYTNRYTKGCTKGCTNEYSNDNMCKECLDIKNICYQEEKEKCDIIKYNDDKDYSHNCCYEECYNMKREKKKFVCCLSDKCNSFLNEQIKRRRSIMGWNILRNRIKCCKNKMYTSNDFMKTFDSLLKKVYVCKGENKKNNGTKIIKRFEEKYDNNLLFKRKDEKRSLSASPKKKKKKKKKIIVLTARVHPGETNSSYAIHGFIAFIISNNIYAHILREKFIFIIIPMLNIDGVILGNNRYCYNGFDLNRQWSNPIGYIHPTIYSAKLLMKNISENNKIIFFCDFHSHSRKYNCFIFGNEGSYNYVKNKKMCEVFPEIYSHTLPWFALVDTVYKADNENKGSARLISGKEFSLDCSYTFEISLFGIQIRKDFNIMYDEKKDIFYVQNYFEGYQNGDDNIKGGDNIKGGDNIKGDDNINGDDNIKGGDNIKGDDNIKRDDNFQRDDNFQRDDNFQRGDNFHRGDNFHRDDIYDKMNKHYINNNYYYDKNSYDFLYFDENLLFMTGVSFGICLFKFINFLSYHKSSICRRTCEEKEKEHISTETCGILCAKNNKDDEEKCNESKKQNHDAFKTGNSLEFDKGEEHLLSDTHRMVNTFLCNSMNKSKNKNKNKKGYNYILNKYGFIKLKSSKKHIEEVKRIRKLKKKKYMVKEVYELGRKIKQNKYYHNYPFGLYKVNINDVIRILNKINMDDPNGKYKGPGFNNSVDMKKKIKNKNESKTEKKSKTENKSKSKSKNKSKSKNKSKRKKVIVIL.

The Extracellular segment spans residues 1–1367 (MLFKNEDSGN…SYDFLYFDEN (1367 aa)). Residue Asn-19 is glycosylated (N-linked (GlcNAc...) asparagine). The tract at residues 32 to 74 (RNDNKNNDNEDNKQDDEEKNDEDDNKSNLLLEENEENKRQGDK) is disordered. Basic and acidic residues predominate over residues 33 to 43 (NDNKNNDNEDN). Residues 44-55 (KQDDEEKNDEDD) show a composition bias toward acidic residues. 2 N-linked (GlcNAc...) asparagine glycosylation sites follow: Asn-56 and Asn-102. Residues 309–328 (GNHYDAHESTNTYDEEKTRE) are disordered. N-linked (GlcNAc...) asparagine glycosylation is found at Asn-354, Asn-487, Asn-508, Asn-529, Asn-550, Asn-571, Asn-589, Asn-687, Asn-802, and Asn-1010. Residues 497 to 559 (VNNLDSTVNY…NSTGNNINNI (63 aa)) form a possible malaria epitope region. Residues 1004 to 1261 (GENKKNNGTK…FYVQNYFEGY (258 aa)) form the Peptidase M14 domain. Residues His-1059 and Glu-1062 each coordinate Zn(2+). 2 N-linked (GlcNAc...) asparagine glycosylation sites follow: Asn-1064 and Asn-1141. His-1155 lines the Zn(2+) pocket. Glu-1229 acts as the Proton donor/acceptor in catalysis. The interval 1279–1329 (NIKGDDNINGDDNIKGGDNIKGDDNIKRDDNFQRDDNFQRDDNFQRGDNFH) is disordered. Residues 1368–1388 (LLFMTGVSFGICLFKFINFLS) form a helical membrane-spanning segment. Residues 1389 to 1620 (YHKSSICRRT…SKRKKVIVIL (232 aa)) lie on the Cytoplasmic side of the membrane. A disordered region spans residues 1560 to 1620 (PNGKYKGPGF…SKRKKVIVIL (61 aa)). Basic and acidic residues predominate over residues 1581–1597 (NKNESKTEKKSKTENKS). Positions 1598 to 1620 (KSKSKNKSKSKNKSKRKKVIVIL) are enriched in basic residues.

It belongs to the peptidase M14 family. Zn(2+) serves as cofactor.

It is found in the membrane. The sequence is that of Putative zinc carboxypeptidase from Plasmodium falciparum (isolate 3D7).